A 639-amino-acid polypeptide reads, in one-letter code: Homeobox protein 9 (639 aa).

Disordered regions lie at residues 1–45, 66–144, 157–179, 262–313, 331–422, and 436–547; these read MLNS…DKQN, SPNH…DDNS, NQNQ…QNQN, PRTL…SSGT, SESS…QTSN, and TNKN…NNEN. Residues 72–109 are a coiled coil; sequence ANNNNNNNNNNNNNNNNNNNNNNNNNNNNNNNNNNNIQ. 2 stretches are compositionally biased toward low complexity: residues 73–119 and 126–142; these read NNNN…SNNN and GSLN…GNDD. Coiled coils occupy residues 152 to 184 and 230 to 296; these read SNQN…KDSW and EIEI…NINE. The span at 266–300 shows a compositional bias: low complexity; it reads NNSSDSISENINNNNNNNNNNNNNNNNNINESNIN. Over residues 345–354 the composition is skewed to basic and acidic residues; the sequence is QPRKVPRDLN. Over residues 358–399 the composition is skewed to low complexity; it reads NNNINYANNNNNNNNNNNNNNHNNNINNNNNNNNNNNNNSNN. Residues 365–396 are a coiled coil; it reads NNNNNNNNNNNNNNHNNNINNNNNNNNNNNNN. A compositionally biased stretch (polar residues) spans 405–422; sequence GSITNSVNIKPSKDQTSN. Positions 436-526 are enriched in low complexity; sequence TNKNNNNNNN…NNNLTSSSNN (91 aa). Residues 532–547 are compositionally biased toward polar residues; that stretch reads GNTSPNQSSANGNNEN. The homeobox DNA-binding region spans 559-621; it reads KRKKRGKLPG…NARRRILPRQ (63 aa).

The protein resides in the nucleus. Putative transcription factor. The sequence is that of Homeobox protein 9 (hbx9) from Dictyostelium discoideum (Social amoeba).